Here is a 299-residue protein sequence, read N- to C-terminus: Oxygen-dependent coproporphyrinogen-III oxidase (299 aa).

Serine 92 lines the substrate pocket. Residues histidine 96 and histidine 106 each contribute to the a divalent metal cation site. Histidine 106 (proton donor) is an active-site residue. Asparagine 108–arginine 110 contributes to the substrate binding site. A divalent metal cation-binding residues include histidine 145 and histidine 175. The tract at residues tyrosine 240–glutamate 275 is important for dimerization. Residue glycine 258–arginine 260 participates in substrate binding.

Belongs to the aerobic coproporphyrinogen-III oxidase family. Homodimer. The cofactor is a divalent metal cation.

The protein resides in the cytoplasm. The catalysed reaction is coproporphyrinogen III + O2 + 2 H(+) = protoporphyrinogen IX + 2 CO2 + 2 H2O. Its pathway is porphyrin-containing compound metabolism; protoporphyrin-IX biosynthesis; protoporphyrinogen-IX from coproporphyrinogen-III (O2 route): step 1/1. Involved in the heme biosynthesis. Catalyzes the aerobic oxidative decarboxylation of propionate groups of rings A and B of coproporphyrinogen-III to yield the vinyl groups in protoporphyrinogen-IX. The sequence is that of Oxygen-dependent coproporphyrinogen-III oxidase from Salmonella enteritidis PT4 (strain P125109).